We begin with the raw amino-acid sequence, 123 residues long: WAP four-disulfide core domain protein 2 (123 aa).

The N-terminal stretch at 1–26 is a signal peptide; the sequence is MPACRLGLLVASLLLGLLLGLPPVTG. WAP domains follow at residues 28-69 and 72-122; these read GAEK…VTIC and PNEK…VTPV. Cystine bridges form between C35/C61, C44/C65, C48/C60, C54/C69, C79/C109, C92/C113, C96/C108, and C102/C118.

As to quaternary structure, homotrimer; disulfide-linked. As to expression, detected in the distal parts of the epididymis.

It localises to the secreted. In terms of biological role, broad range protease inhibitor. This chain is WAP four-disulfide core domain protein 2 (WFDC2), found in Sus scrofa (Pig).